Here is a 95-residue protein sequence, read N- to C-terminus: Co-chaperonin GroES (95 aa).

The protein belongs to the GroES chaperonin family. As to quaternary structure, heptamer of 7 subunits arranged in a ring. Interacts with the chaperonin GroEL.

It localises to the cytoplasm. Functionally, together with the chaperonin GroEL, plays an essential role in assisting protein folding. The GroEL-GroES system forms a nano-cage that allows encapsulation of the non-native substrate proteins and provides a physical environment optimized to promote and accelerate protein folding. GroES binds to the apical surface of the GroEL ring, thereby capping the opening of the GroEL channel. In Desulforapulum autotrophicum (strain ATCC 43914 / DSM 3382 / VKM B-1955 / HRM2) (Desulfobacterium autotrophicum), this protein is Co-chaperonin GroES.